A 700-amino-acid polypeptide reads, in one-letter code: MHSDELLVEILVEELPAQALLNEYKEMPKKLHALFNKRALEVGKIEIFYTPRRLCLLVKDFPLLTQETKEEFFGPPVKIACNHQDKTQGLNELGLGFYQKLGLKDHQHFQTAFKNNNEVLYHAKIHAKEPTKDLIMPIVLEFLEGLNFGKSMRWGNVEKSFIRPIHNICVLFNGENFNDIEVKEYGFKTKQATKAHRQEGFDFIQVDSPKAYFEVLEKNHVILDPKKRKAKILQEIKELETKHRIIVEIDRDLLDEVVAITEYPSALLGEFDKAFLKLPNEIIITSMKENQRYFAAFNQKSQESPTLHNGFIVVSNAISKDKQKIIAGNQKVLKARLSDAVFFYENDLKKPLDNAPLESVVFVQGLGTLKDKMEREAIIAQYLTQKYASSLNMPLEKALELVGRAVRIAKADLLSEVVYEFSELQGIMGYYYALKQNENELVALSVKEQYLPASENAPLPSSVFSAIVALSLKLDSLFSLFSVGKIPSGSKDPFALRRLSFGLLKIVVHYGLEFDLKADLKNLFEKVGVYQSFDLEVLEKFLLERFNNLIDCNPSIIRSVLNTNERGIVKIIQKVKALKRFLDDPKNAQKKELLFSAFKRLANINKDRNPNESSEFFISLFKESQEHALFEAFNAIKTSTFESLDSKIEAYFGLHAPLEEYFKSVLVMDKDIEIQKNRKNFLWGVYQSFLEIGDIKEIAI.

Belongs to the class-II aminoacyl-tRNA synthetase family. Tetramer of two alpha and two beta subunits.

The protein resides in the cytoplasm. It carries out the reaction tRNA(Gly) + glycine + ATP = glycyl-tRNA(Gly) + AMP + diphosphate. This chain is Glycine--tRNA ligase beta subunit, found in Helicobacter pylori (strain Shi470).